Consider the following 131-residue polypeptide: Small ribosomal subunit protein bS6 (131 aa).

Residues 98 to 131 (EASPMVKAKDERRERRDDFANETADDAEAGDSEE) are disordered. Positions 104–116 (KAKDERRERRDDF) are enriched in basic and acidic residues. The span at 120–131 (TADDAEAGDSEE) shows a compositional bias: acidic residues.

Belongs to the bacterial ribosomal protein bS6 family.

Its function is as follows. Binds together with bS18 to 16S ribosomal RNA. This chain is Small ribosomal subunit protein bS6, found in Salmonella dublin (strain CT_02021853).